We begin with the raw amino-acid sequence, 597 residues long: UvrABC system protein C (597 aa).

The region spanning 14-91 is the GIY-YIG domain; that stretch reads KKPGCYLWKD…INQYQPRFNL (78 aa).

Belongs to the UvrC family. In terms of assembly, interacts with UvrB in an incision complex.

The protein resides in the cytoplasm. Functionally, the UvrABC repair system catalyzes the recognition and processing of DNA lesions. UvrC both incises the 5' and 3' sides of the lesion. The N-terminal half is responsible for the 3' incision and the C-terminal half is responsible for the 5' incision. This Mycoplasma genitalium (strain ATCC 33530 / DSM 19775 / NCTC 10195 / G37) (Mycoplasmoides genitalium) protein is UvrABC system protein C.